Here is an 85-residue protein sequence, read N- to C-terminus: UPF0213 protein NP_0776A (85 aa).

Positions 3–78 (ADHYVYVLSC…KSLSRAKKER (76 aa)) constitute a GIY-YIG domain. Residues 58-70 (KSAAMQREHEIKS) are compositionally biased toward basic and acidic residues. Residues 58–85 (KSAAMQREHEIKSLSRAKKERLVADETG) are disordered.

The protein belongs to the UPF0213 family.

The polypeptide is UPF0213 protein NP_0776A (Natronomonas pharaonis (strain ATCC 35678 / DSM 2160 / CIP 103997 / JCM 8858 / NBRC 14720 / NCIMB 2260 / Gabara) (Halobacterium pharaonis)).